The chain runs to 168 residues: Photosystem I assembly protein Ycf3 (168 aa).

TPR repeat units follow at residues 35-68 (AFTY…EIDP), 72-105 (SYIL…NPFL), and 120-153 (GEQA…TPGN).

The protein belongs to the Ycf3 family.

Its subcellular location is the plastid. The protein localises to the chloroplast thylakoid membrane. In terms of biological role, essential for the assembly of the photosystem I (PSI) complex. May act as a chaperone-like factor to guide the assembly of the PSI subunits. This Illicium oligandrum (Star anise) protein is Photosystem I assembly protein Ycf3.